The sequence spans 840 residues: Phosphatidylglycerol lysyltransferase (840 aa).

The Cytoplasmic portion of the chain corresponds to 1 to 8 (MNQEVKNK). A helical membrane pass occupies residues 9-29 (IFSILKITFATALFIFVAITL). Over 30–52 (YRELSGINFKDTLVEFSKINRMS) the chain is Extracellular. Residues 53–73 (LVLLFIGGGASLVILSMYDVI) traverse the membrane as a helical segment. Over 74-89 (LSRALKMDISLGKVLR) the chain is Cytoplasmic. A helical transmembrane segment spans residues 90–110 (VSYIINALNAIVGFGGFIGAG). Over 111-128 (VRAMVYKNYTHDKKKLVH) the chain is Extracellular. Residues 129-149 (FISLILISMLTGLSLLSLLIV) traverse the membrane as a helical segment. Residues 150 to 161 (FHVFDASLILDK) lie on the Cytoplasmic side of the membrane. The helical transmembrane segment at 162–182 (ITWVRWVLYVVSFFLPLFIIY) threads the bilayer. Residues 183-200 (SMVRPPDKNNRFVGLYCT) are Extracellular-facing. The helical transmembrane segment at 201 to 221 (LVSCVEWLAAAVVLYFCGVIV) threads the bilayer. The Cytoplasmic portion of the chain corresponds to 222–229 (DAHVSFMS). The helical transmembrane segment at 230–250 (FIAIFIIAALSGLVSFIPGGF) threads the bilayer. The Extracellular segment spans residues 251–271 (GAFDLVVLLGFKTLGVPEEKV). A helical transmembrane segment spans residues 272–292 (LLMLLLYRFAYYFVPVIIALI). At 293-337 (LSSFEFGTSAKKYIEGSKYFIPAKDVTSFLMSYQKDIIAKIPSLS) the chain is on the cytoplasmic side. Residues 338–358 (LAILVFFTSMIFFVNNLTIVY) traverse the membrane as a helical segment. The Extracellular portion of the chain corresponds to 359-369 (DALYDGNHLTY). A helical transmembrane segment spans residues 370 to 390 (YILLAIHTSACLLLLLNVVGI). Residues 391–394 (YKQS) lie on the Cytoplasmic side of the membrane. The next 2 membrane-spanning stretches (helical) occupy residues 395–415 (RRAI…TFFT) and 416–436 (YASY…IVAF). At 437–450 (RRARRLKRPVRMRN) the chain is on the cytoplasmic side. Residues 451-471 (IVAMLLFSLFILYVNHIFIAG) traverse the membrane as a helical segment. The Extracellular portion of the chain corresponds to 472–489 (TLYALDIYTIEMHTSVLR). Residues 490 to 510 (YYFWLTILIIAIIIGMIAWLF) form a helical membrane-spanning segment. The Cytoplasmic portion of the chain corresponds to 511 to 840 (DYQFSKVRIS…SKVMRVIRHK (330 aa)).

The protein belongs to the LPG synthase family.

The protein localises to the cell membrane. It catalyses the reaction L-lysyl-tRNA(Lys) + a 1,2-diacyl-sn-glycero-3-phospho-(1'-sn-glycerol) = a 1,2-diacyl-sn-glycero-3-phospho-1'-(3'-O-L-lysyl)-sn-glycerol + tRNA(Lys). Catalyzes the transfer of a lysyl group from L-lysyl-tRNA(Lys) to membrane-bound phosphatidylglycerol (PG), which produces lysylphosphatidylglycerol (LPG), a major component of the bacterial membrane with a positive net charge. LPG synthesis contributes to bacterial virulence as it is involved in the resistance mechanism against cationic antimicrobial peptides (CAMP) produces by the host's immune system (defensins, cathelicidins) and by the competing microorganisms (bacteriocins). In fact, the modification of anionic phosphatidylglycerol with positively charged L-lysine results in repulsion of the peptides. The chain is Phosphatidylglycerol lysyltransferase (mprF) from Staphylococcus aureus (strain COL).